Here is a 425-residue protein sequence, read N- to C-terminus: UPF0229 protein ETA_15540 (425 aa).

The interval 60 to 111 (NEPSFHQGRGGERYRVHPGNDHFVQNDRVDRPQGGGAGGSGQGNAGKDGEGQ) is disordered. The segment covering 68–90 (RGGERYRVHPGNDHFVQNDRVDR) has biased composition (basic and acidic residues). Gly residues predominate over residues 92 to 105 (QGGGAGGSGQGNAG).

The protein belongs to the UPF0229 family.

The polypeptide is UPF0229 protein ETA_15540 (Erwinia tasmaniensis (strain DSM 17950 / CFBP 7177 / CIP 109463 / NCPPB 4357 / Et1/99)).